A 333-amino-acid chain; its full sequence is DNA-directed RNA polymerase subunit alpha (333 aa).

The segment at M1–K234 is alpha N-terminal domain (alpha-NTD). Residues I248–A333 form an alpha C-terminal domain (alpha-CTD) region.

Belongs to the RNA polymerase alpha chain family. Homodimer. The RNAP catalytic core consists of 2 alpha, 1 beta, 1 beta' and 1 omega subunit. When a sigma factor is associated with the core the holoenzyme is formed, which can initiate transcription.

The catalysed reaction is RNA(n) + a ribonucleoside 5'-triphosphate = RNA(n+1) + diphosphate. Functionally, DNA-dependent RNA polymerase catalyzes the transcription of DNA into RNA using the four ribonucleoside triphosphates as substrates. The protein is DNA-directed RNA polymerase subunit alpha of Pseudomonas fluorescens (strain Pf0-1).